The primary structure comprises 66 residues: Nigrocin-2GRa (66 aa).

The signal sequence occupies residues Met-1–Cys-22. The propeptide occupies Gln-23–Arg-45. Residues Cys-60 and Cys-66 are joined by a disulfide bond.

In terms of tissue distribution, expressed by the skin glands.

The protein localises to the secreted. Functionally, antimicrobial peptide active at least against the Gram-positive bacterium S.aureus but with otherwise unclear activity spectrum. Lacks hemolytic activity against rabbit or human erythrocytes. The protein is Nigrocin-2GRa of Odorrana grahami (Yunnanfu frog).